The primary structure comprises 1371 residues: DNA-directed RNA polymerase subunit beta (1371 aa).

This sequence belongs to the RNA polymerase beta chain family. In terms of assembly, the RNAP catalytic core consists of 2 alpha, 1 beta, 1 beta' and 1 omega subunit. When a sigma factor is associated with the core the holoenzyme is formed, which can initiate transcription.

The enzyme catalyses RNA(n) + a ribonucleoside 5'-triphosphate = RNA(n+1) + diphosphate. Functionally, DNA-dependent RNA polymerase catalyzes the transcription of DNA into RNA using the four ribonucleoside triphosphates as substrates. This Geobacter sp. (strain M21) protein is DNA-directed RNA polymerase subunit beta.